A 155-amino-acid polypeptide reads, in one-letter code: Ribonuclease H (155 aa).

Positions 1 to 142 (MLKQVEIFTD…CDELARAAAS (142 aa)) constitute an RNase H type-1 domain. Mg(2+) contacts are provided by D10, E48, D70, and D134.

It belongs to the RNase H family. As to quaternary structure, monomer. Mg(2+) serves as cofactor.

It localises to the cytoplasm. The catalysed reaction is Endonucleolytic cleavage to 5'-phosphomonoester.. Endonuclease that specifically degrades the RNA of RNA-DNA hybrids. In Klebsiella pneumoniae (strain 342), this protein is Ribonuclease H.